The chain runs to 120 residues: Small ribosomal subunit protein uS19 (120 aa).

This sequence belongs to the universal ribosomal protein uS19 family.

The protein is Small ribosomal subunit protein uS19 (RPS15) of Naegleria gruberi (Amoeba).